The sequence spans 203 residues: Peptidyl-tRNA hydrolase (203 aa).

Position 14 (Y14) interacts with tRNA. H19 serves as the catalytic Proton acceptor. Residues Y64, N66, and N112 each coordinate tRNA.

The protein belongs to the PTH family. In terms of assembly, monomer.

Its subcellular location is the cytoplasm. It catalyses the reaction an N-acyl-L-alpha-aminoacyl-tRNA + H2O = an N-acyl-L-amino acid + a tRNA + H(+). Hydrolyzes ribosome-free peptidyl-tRNAs (with 1 or more amino acids incorporated), which drop off the ribosome during protein synthesis, or as a result of ribosome stalling. Its function is as follows. Catalyzes the release of premature peptidyl moieties from peptidyl-tRNA molecules trapped in stalled 50S ribosomal subunits, and thus maintains levels of free tRNAs and 50S ribosomes. In Methylobacterium nodulans (strain LMG 21967 / CNCM I-2342 / ORS 2060), this protein is Peptidyl-tRNA hydrolase.